The sequence spans 510 residues: tRNA-2-methylthio-N(6)-dimethylallyladenosine synthase (510 aa).

The region spanning 19-135 (RTFEVRTYGC…LPALLDRARH (117 aa)) is the MTTase N-terminal domain. The [4Fe-4S] cluster site is built by C28, C64, C98, C172, C176, and C179. The region spanning 158–394 (RESSYAAWVS…IELQERISLE (237 aa)) is the Radical SAM core domain. The TRAM domain maps to 397–467 (TAQIGRRVEL…PHHLIADAGL (71 aa)). Residues 477–510 (DAHAAGQKPRTGVGLGMPAVGAPDPLPATTGCAR) are disordered.

The protein belongs to the methylthiotransferase family. MiaB subfamily. As to quaternary structure, monomer. [4Fe-4S] cluster is required as a cofactor.

The protein localises to the cytoplasm. It carries out the reaction N(6)-dimethylallyladenosine(37) in tRNA + (sulfur carrier)-SH + AH2 + 2 S-adenosyl-L-methionine = 2-methylsulfanyl-N(6)-dimethylallyladenosine(37) in tRNA + (sulfur carrier)-H + 5'-deoxyadenosine + L-methionine + A + S-adenosyl-L-homocysteine + 2 H(+). Catalyzes the methylthiolation of N6-(dimethylallyl)adenosine (i(6)A), leading to the formation of 2-methylthio-N6-(dimethylallyl)adenosine (ms(2)i(6)A) at position 37 in tRNAs that read codons beginning with uridine. This chain is tRNA-2-methylthio-N(6)-dimethylallyladenosine synthase, found in Mycolicibacterium vanbaalenii (strain DSM 7251 / JCM 13017 / BCRC 16820 / KCTC 9966 / NRRL B-24157 / PYR-1) (Mycobacterium vanbaalenii).